A 269-amino-acid polypeptide reads, in one-letter code: Tryptophan synthase alpha chain (269 aa).

Residues E49 and D60 each act as proton acceptor in the active site.

The protein belongs to the TrpA family. As to quaternary structure, tetramer of two alpha and two beta chains.

The enzyme catalyses (1S,2R)-1-C-(indol-3-yl)glycerol 3-phosphate + L-serine = D-glyceraldehyde 3-phosphate + L-tryptophan + H2O. Its pathway is amino-acid biosynthesis; L-tryptophan biosynthesis; L-tryptophan from chorismate: step 5/5. Functionally, the alpha subunit is responsible for the aldol cleavage of indoleglycerol phosphate to indole and glyceraldehyde 3-phosphate. The protein is Tryptophan synthase alpha chain of Acidovorax sp. (strain JS42).